A 407-amino-acid polypeptide reads, in one-letter code: Arginine biosynthesis bifunctional protein ArgJ (407 aa).

Threonine 155, lysine 181, threonine 192, glutamate 278, asparagine 402, and threonine 407 together coordinate substrate. Catalysis depends on threonine 192, which acts as the Nucleophile.

It belongs to the ArgJ family. Heterotetramer of two alpha and two beta chains.

Its subcellular location is the cytoplasm. The enzyme catalyses N(2)-acetyl-L-ornithine + L-glutamate = N-acetyl-L-glutamate + L-ornithine. It carries out the reaction L-glutamate + acetyl-CoA = N-acetyl-L-glutamate + CoA + H(+). The protein operates within amino-acid biosynthesis; L-arginine biosynthesis; L-ornithine and N-acetyl-L-glutamate from L-glutamate and N(2)-acetyl-L-ornithine (cyclic): step 1/1. It participates in amino-acid biosynthesis; L-arginine biosynthesis; N(2)-acetyl-L-ornithine from L-glutamate: step 1/4. Functionally, catalyzes two activities which are involved in the cyclic version of arginine biosynthesis: the synthesis of N-acetylglutamate from glutamate and acetyl-CoA as the acetyl donor, and of ornithine by transacetylation between N(2)-acetylornithine and glutamate. The sequence is that of Arginine biosynthesis bifunctional protein ArgJ from Thiobacillus denitrificans (strain ATCC 25259 / T1).